The primary structure comprises 292 residues: ATP synthase gamma chain (292 aa).

Belongs to the ATPase gamma chain family. As to quaternary structure, F-type ATPases have 2 components, CF(1) - the catalytic core - and CF(0) - the membrane proton channel. CF(1) has five subunits: alpha(3), beta(3), gamma(1), delta(1), epsilon(1). CF(0) has three main subunits: a, b and c.

The protein resides in the cell inner membrane. Functionally, produces ATP from ADP in the presence of a proton gradient across the membrane. The gamma chain is believed to be important in regulating ATPase activity and the flow of protons through the CF(0) complex. This chain is ATP synthase gamma chain, found in Brucella abortus (strain S19).